The chain runs to 410 residues: Putative transporter AmpG 1 (410 aa).

12 helical membrane passes run 5–25 (LSIIWLFGLISGFNIMITGNT), 40–60 (IGLLSLITLPYSINFLFAPIF), 76–96 (LSWICLTSIALVFFVYILSFL), 98–118 (PFDNLLLFASISLIISFFSSM), 141–161 (GIYIFGYRFGMLLANSGAIYL), 169–189 (EIYKIFAILIFIYLILLIVGV), 217–237 (ILKPIGSISFIILILIFLILY), 265–285 (VGKFWGVMGAIVGGLLGGFIM), 290–310 (ILDSILLFGIIHALAHILFII), 320–340 (LLFITIGAESITGGMTMTAYI), 356–378 (YSFFSSMMGISRSIFPIISGYIV), and 383–402 (WQNFFLFTTIITIPSLLVLL).

It belongs to the major facilitator superfamily.

It localises to the cell inner membrane. In Rickettsia bellii (strain RML369-C), this protein is Putative transporter AmpG 1 (ampG1).